Consider the following 427-residue polypeptide: ATP-dependent RNA helicase DDX39A (427 aa).

Residues 1–19 (MAEQDVENELLDYDEDEEP) are compositionally biased toward acidic residues. The disordered stretch occupies residues 1 to 36 (MAEQDVENELLDYDEDEEPQAPQESTPAPPKKDVKG). The residue at position 2 (A2) is an N-acetylalanine. A Glycyl lysine isopeptide (Lys-Gly) (interchain with G-Cter in SUMO2) cross-link involves residue K31. K35 carries the N6-acetyllysine; alternate modification. K35 participates in a covalent cross-link: Glycyl lysine isopeptide (Lys-Gly) (interchain with G-Cter in SUMO2); alternate. S37 carries the phosphoserine modification. Residues 44–72 (SGFRDFLLKPELLRAIVDCGFEHPSEVQH) carry the Q motif motif. The 174-residue stretch at 75–248 (IPQAILGMDV…RKFMQDPMEV (174 aa)) folds into the Helicase ATP-binding domain. 88 to 95 (AKSGMGKT) contacts ATP. Residues K154 and K162 each participate in a glycyl lysine isopeptide (Lys-Gly) (interchain with G-Cter in SUMO2) cross-link. Position 171 is a phosphothreonine (T171). The DECD box motif lies at 195 to 198 (DECD). Residues K240 and K255 each participate in a glycyl lysine isopeptide (Lys-Gly) (interchain with G-Cter in SUMO2) cross-link. The Helicase C-terminal domain maps to 260–421 (GLQQYYVKLK…ELPEEIDIST (162 aa)). S426 is subject to Phosphoserine.

This sequence belongs to the DEAD box helicase family. DECD subfamily. Binds ALYREF/THOC4 and DDX39B/BAT1. Interacts with the apo-AREX complex component SARNP. Interacts with MX1. Interacts with MCM3AP isoform GANP. Interacts with ECD. Interacts with PHAX; this interaction stimulates PHAX RNA binding activity. SUMOylated by RANBP2; SUMOylation modification affects its ability to bind RNA.

The protein localises to the nucleus. The protein resides in the cytoplasm. It catalyses the reaction ATP + H2O = ADP + phosphate + H(+). Helicase that plays an essential role in mRNA export and is involved in multiple steps in RNA metabolism including alternative splicing. Regulates nuclear mRNA export to the cytoplasm through association with ECD. Also involved in spliceosomal uridine-rich small nuclear RNA (U snRNA) export by stimulating the RNA binding of adapter PHAX. Plays a role in the negative regulation of type I IFN production by increasing the nuclear retention of antiviral transcripts and thus reducing their protein expression. Independently of the interferon pathway, plays an antiviral role against alphaviruses by binding to a 5' conserved sequence element in the viral genomic RNA. This Mus musculus (Mouse) protein is ATP-dependent RNA helicase DDX39A.